The sequence spans 292 residues: 2-(5''-triphosphoribosyl)-3'-dephosphocoenzyme-A synthase (292 aa).

The protein belongs to the CitG/MdcB family.

It catalyses the reaction 3'-dephospho-CoA + ATP = 2'-(5''-triphospho-alpha-D-ribosyl)-3'-dephospho-CoA + adenine. Its function is as follows. Catalyzes the formation of 2-(5''-triphosphoribosyl)-3'-dephosphocoenzyme-A, the precursor of the prosthetic group of the holo-acyl carrier protein (gamma chain) of citrate lyase, from ATP and dephospho-CoA. This Escherichia coli (strain ATCC 8739 / DSM 1576 / NBRC 3972 / NCIMB 8545 / WDCM 00012 / Crooks) protein is 2-(5''-triphosphoribosyl)-3'-dephosphocoenzyme-A synthase.